A 376-amino-acid chain; its full sequence is Small ribosomal subunit protein uS11m (376 aa).

Belongs to the universal ribosomal protein uS11 family. In terms of assembly, component of the mitochondrial small ribosomal subunit (mt-SSU). Mature N.crassa 74S mitochondrial ribosomes consist of a small (37S) and a large (54S) subunit. The 37S small subunit contains a 16S ribosomal RNA (16S mt-rRNA) and 32 different proteins. The 54S large subunit contains a 23S rRNA (23S mt-rRNA) and 42 different proteins.

The protein resides in the mitochondrion. Component of the mitochondrial ribosome (mitoribosome), a dedicated translation machinery responsible for the synthesis of mitochondrial genome-encoded proteins, including at least some of the essential transmembrane subunits of the mitochondrial respiratory chain. The mitoribosomes are attached to the mitochondrial inner membrane and translation products are cotranslationally integrated into the membrane. The protein is Small ribosomal subunit protein uS11m (mrps18) of Neurospora crassa (strain ATCC 24698 / 74-OR23-1A / CBS 708.71 / DSM 1257 / FGSC 987).